The sequence spans 62 residues: Conotoxin Qc5.2 (62 aa).

An N-terminal signal peptide occupies residues 1-22 (MRCVPVFIILLLLSPSAPSVDA). Residues 23-48 (HPMTKDDVPQASLHDDAKRTLQVPWM) constitute a propeptide that is removed on maturation. Residue valine 60 is modified to Valine amide.

This sequence belongs to the conotoxin T superfamily. In terms of processing, contains 2 disulfide bonds that can be either 'C1-C3, C2-C4' or 'C1-C4, C2-C3', since these disulfide connectivities have been observed for conotoxins with cysteine framework V (for examples, see AC P0DQQ7 and AC P81755). As to expression, expressed by the venom duct.

It is found in the secreted. The chain is Conotoxin Qc5.2 from Conus quercinus (Oak cone).